The sequence spans 346 residues: Methylthioribose-1-phosphate isomerase (346 aa).

Substrate contacts are provided by residues 45–47 (RGA), Arg-87, and Gln-194. Asp-235 serves as the catalytic Proton donor. 245–246 (NK) contributes to the substrate binding site.

It belongs to the eIF-2B alpha/beta/delta subunits family. MtnA subfamily.

The enzyme catalyses 5-(methylsulfanyl)-alpha-D-ribose 1-phosphate = 5-(methylsulfanyl)-D-ribulose 1-phosphate. Its pathway is amino-acid biosynthesis; L-methionine biosynthesis via salvage pathway; L-methionine from S-methyl-5-thio-alpha-D-ribose 1-phosphate: step 1/6. Functionally, catalyzes the interconversion of methylthioribose-1-phosphate (MTR-1-P) into methylthioribulose-1-phosphate (MTRu-1-P). This Syntrophomonas wolfei subsp. wolfei (strain DSM 2245B / Goettingen) protein is Methylthioribose-1-phosphate isomerase.